The primary structure comprises 522 residues: 3-octaprenyl-4-hydroxybenzoate carboxy-lyase (522 aa).

Mn(2+) is bound at residue Asn-181. Residues 184–186 (IYR), 198–200 (RWL), and 203–204 (RG) each bind prenylated FMN. Glu-247 is a Mn(2+) binding site. Asp-322 functions as the Proton donor in the catalytic mechanism.

Belongs to the UbiD family. In terms of assembly, homohexamer. Prenylated FMN is required as a cofactor. The cofactor is Mn(2+).

It localises to the cell membrane. It carries out the reaction a 4-hydroxy-3-(all-trans-polyprenyl)benzoate + H(+) = a 2-(all-trans-polyprenyl)phenol + CO2. It functions in the pathway cofactor biosynthesis; ubiquinone biosynthesis. In terms of biological role, catalyzes the decarboxylation of 3-octaprenyl-4-hydroxy benzoate to 2-octaprenylphenol, an intermediate step in ubiquinone biosynthesis. The protein is 3-octaprenyl-4-hydroxybenzoate carboxy-lyase of Paraburkholderia xenovorans (strain LB400).